Reading from the N-terminus, the 331-residue chain is Phosphoribosylformylglycinamidine cyclo-ligase (331 aa).

It belongs to the AIR synthase family.

The protein resides in the cytoplasm. The catalysed reaction is 2-formamido-N(1)-(5-O-phospho-beta-D-ribosyl)acetamidine + ATP = 5-amino-1-(5-phospho-beta-D-ribosyl)imidazole + ADP + phosphate + H(+). It functions in the pathway purine metabolism; IMP biosynthesis via de novo pathway; 5-amino-1-(5-phospho-D-ribosyl)imidazole from N(2)-formyl-N(1)-(5-phospho-D-ribosyl)glycinamide: step 2/2. The chain is Phosphoribosylformylglycinamidine cyclo-ligase from Clostridium novyi (strain NT).